We begin with the raw amino-acid sequence, 110 residues long: Large ribosomal subunit protein uL22 (110 aa).

The protein belongs to the universal ribosomal protein uL22 family. As to quaternary structure, part of the 50S ribosomal subunit.

This protein binds specifically to 23S rRNA; its binding is stimulated by other ribosomal proteins, e.g. L4, L17, and L20. It is important during the early stages of 50S assembly. It makes multiple contacts with different domains of the 23S rRNA in the assembled 50S subunit and ribosome. Its function is as follows. The globular domain of the protein is located near the polypeptide exit tunnel on the outside of the subunit, while an extended beta-hairpin is found that lines the wall of the exit tunnel in the center of the 70S ribosome. This is Large ribosomal subunit protein uL22 from Verminephrobacter eiseniae (strain EF01-2).